A 266-amino-acid polypeptide reads, in one-letter code: 3-methyl-2-oxobutanoate hydroxymethyltransferase 2 (266 aa).

Residues aspartate 45 and aspartate 84 each contribute to the Mg(2+) site. 3-methyl-2-oxobutanoate is bound by residues 45–46 (DS), aspartate 84, and lysine 112. A Mg(2+)-binding site is contributed by glutamate 114. Glutamate 181 (proton acceptor) is an active-site residue.

It belongs to the PanB family. Homodecamer; pentamer of dimers. Mg(2+) is required as a cofactor.

The protein resides in the cytoplasm. It carries out the reaction 3-methyl-2-oxobutanoate + (6R)-5,10-methylene-5,6,7,8-tetrahydrofolate + H2O = 2-dehydropantoate + (6S)-5,6,7,8-tetrahydrofolate. The protein operates within cofactor biosynthesis; (R)-pantothenate biosynthesis; (R)-pantoate from 3-methyl-2-oxobutanoate: step 1/2. Functionally, catalyzes the reversible reaction in which hydroxymethyl group from 5,10-methylenetetrahydrofolate is transferred onto alpha-ketoisovalerate to form ketopantoate. The chain is 3-methyl-2-oxobutanoate hydroxymethyltransferase 2 from Pseudomonas fluorescens (strain ATCC BAA-477 / NRRL B-23932 / Pf-5).